Consider the following 366-residue polypeptide: tRNA N6-adenosine threonylcarbamoyltransferase (366 aa).

Fe cation is bound by residues His-119 and His-123. Residues 142–146 (LVSGG), Asp-175, Gly-188, Asp-192, and Asn-281 each bind substrate. Asp-309 lines the Fe cation pocket.

This sequence belongs to the KAE1 / TsaD family. Requires Fe(2+) as cofactor.

It localises to the cytoplasm. The catalysed reaction is L-threonylcarbamoyladenylate + adenosine(37) in tRNA = N(6)-L-threonylcarbamoyladenosine(37) in tRNA + AMP + H(+). Required for the formation of a threonylcarbamoyl group on adenosine at position 37 (t(6)A37) in tRNAs that read codons beginning with adenine. Is involved in the transfer of the threonylcarbamoyl moiety of threonylcarbamoyl-AMP (TC-AMP) to the N6 group of A37, together with TsaE and TsaB. TsaD likely plays a direct catalytic role in this reaction. The sequence is that of tRNA N6-adenosine threonylcarbamoyltransferase from Synechococcus sp. (strain JA-3-3Ab) (Cyanobacteria bacterium Yellowstone A-Prime).